The sequence spans 97 residues: uncharacterized protein (97 aa).

The protein to B.licheniformis xpaL1 and to B.subtilis XhlA.

This is an uncharacterized protein from Bacillus licheniformis.